The following is a 314-amino-acid chain: Olfactory receptor 52B4 (314 aa).

Residues Met-1–Met-27 lie on the Extracellular side of the membrane. The N-linked (GlcNAc...) asparagine glycan is linked to Asn-5. The chain crosses the membrane as a helical span at residues Trp-28–Ile-48. Residues Phe-49 to Ser-56 are Cytoplasmic-facing. Residues Leu-57–Thr-77 traverse the membrane as a helical segment. At Cys-78 to Thr-101 the chain is on the extracellular side. Cys-99 and Cys-191 are disulfide-bonded. Residues Gln-102–Phe-122 traverse the membrane as a helical segment. Residues Asp-123–Ala-141 are Cytoplasmic-facing. A helical transmembrane segment spans residues Leu-142 to Ile-162. Residues Phe-163–Ile-198 lie on the Extracellular side of the membrane. The chain crosses the membrane as a helical span at residues Trp-199–Ser-219. At Tyr-220–Ala-239 the chain is on the cytoplasmic side. The chain crosses the membrane as a helical span at residues Leu-240–Thr-260. Topologically, residues Ile-261–His-275 are extracellular. The chain crosses the membrane as a helical span at residues Ile-276–Ile-296. Over Lys-297–Lys-314 the chain is Cytoplasmic.

This sequence belongs to the G-protein coupled receptor 1 family.

The protein localises to the cell membrane. Its function is as follows. Odorant receptor. The protein is Olfactory receptor 52B4 (OR52B4) of Homo sapiens (Human).